Here is a 629-residue protein sequence, read N- to C-terminus: Glycerol-3-phosphate dehydrogenase SDP6, mitochondrial (629 aa).

Residues 1-48 constitute a mitochondrion transit peptide; it reads MSLASIRRLAAGAAVIAAASGGAVYLSPSVASSDKGGGPILDSLRRRL. 75 to 103 serves as a coordination point for FAD; the sequence is DVLVIGGGATGSGVALDAVTRGLRVGLVE.

The protein belongs to the FAD-dependent glycerol-3-phosphate dehydrogenase family. It depends on FAD as a cofactor. As to expression, expressed in germinating seedlings. Also detected in roots, leaves, flowers, developing siliques and germinating seeds.

Its subcellular location is the mitochondrion inner membrane. The enzyme catalyses a quinone + sn-glycerol 3-phosphate = dihydroxyacetone phosphate + a quinol. The protein operates within polyol metabolism; glycerol degradation via glycerol kinase pathway; glycerone phosphate from sn-glycerol 3-phosphate (anaerobic route): step 1/1. Required for glycerol catabolism and involved in NADH/NAD(+) homeostasis. Essential for postgerminative growth and seedling establishment. The sequence is that of Glycerol-3-phosphate dehydrogenase SDP6, mitochondrial from Arabidopsis thaliana (Mouse-ear cress).